Reading from the N-terminus, the 327-residue chain is Phenylalanine--tRNA ligase alpha subunit (327 aa).

A Mg(2+)-binding site is contributed by glutamate 252.

This sequence belongs to the class-II aminoacyl-tRNA synthetase family. Phe-tRNA synthetase alpha subunit type 1 subfamily. In terms of assembly, tetramer of two alpha and two beta subunits. Requires Mg(2+) as cofactor.

The protein localises to the cytoplasm. It catalyses the reaction tRNA(Phe) + L-phenylalanine + ATP = L-phenylalanyl-tRNA(Phe) + AMP + diphosphate + H(+). This is Phenylalanine--tRNA ligase alpha subunit from Shewanella woodyi (strain ATCC 51908 / MS32).